Consider the following 426-residue polypeptide: Tyrosine--tRNA ligase (426 aa).

L-tyrosine is bound at residue Tyr38. The 'HIGH' region motif lies at 43–52 (PTADSLHIGS). Residues Tyr176 and Gln180 each contribute to the L-tyrosine site. The 'KMSKS' region signature appears at 236-240 (KFGKT). Lys239 is a binding site for ATP. An S4 RNA-binding domain is found at 359-426 (QTIVEVLTQS…KKLFNLYIWK (68 aa)).

The protein belongs to the class-I aminoacyl-tRNA synthetase family. TyrS type 1 subfamily. Homodimer.

It is found in the cytoplasm. The enzyme catalyses tRNA(Tyr) + L-tyrosine + ATP = L-tyrosyl-tRNA(Tyr) + AMP + diphosphate + H(+). Its function is as follows. Catalyzes the attachment of tyrosine to tRNA(Tyr) in a two-step reaction: tyrosine is first activated by ATP to form Tyr-AMP and then transferred to the acceptor end of tRNA(Tyr). The polypeptide is Tyrosine--tRNA ligase (Aliivibrio fischeri (strain ATCC 700601 / ES114) (Vibrio fischeri)).